Here is a 341-residue protein sequence, read N- to C-terminus: Glucokinase (341 aa).

Residue 18 to 23 (GDIGGT) participates in ATP binding.

Belongs to the bacterial glucokinase family.

Its subcellular location is the cytoplasm. It catalyses the reaction D-glucose + ATP = D-glucose 6-phosphate + ADP + H(+). This chain is Glucokinase, found in Mesorhizobium japonicum (strain LMG 29417 / CECT 9101 / MAFF 303099) (Mesorhizobium loti (strain MAFF 303099)).